The sequence spans 1302 residues: Cingulin-like protein 1 (1302 aa).

Positions 1-554 (MELYFGEYQH…ELTQQTNEET (554 aa)) are head. The short motif at 37-51 (AGSYGVSIRVQGIDG) is the ZIM element. The tract at residues 75 to 104 (PFPPPVINNLPLHSSNGSVPKENSEELQLP) is disordered. Phosphoserine is present on residues S112 and S202. 3 disordered regions span residues 186-209 (KKPWTCFPKPSNSQPTSPSLEDPA), 251-305 (FTSG…TPTS), and 364-392 (PGLQRRGRSGKRNRINTDDRKRSRSVDSA). Positions 195–204 (PSNSQPTSPS) are enriched in polar residues. Over residues 264 to 282 (AHPETKKTRPDVLPFRRQD) the composition is skewed to basic and acidic residues. 3 positions are modified to phosphoserine: S283, S297, and S298. The segment covering 296-305 (SSSSSTTPTS) has biased composition (low complexity). The segment covering 366-377 (LQRRGRSGKRNR) has biased composition (basic residues). The span at 378-388 (INTDDRKRSRS) shows a compositional bias: basic and acidic residues. Phosphoserine is present on residues S388, S391, and S486. Residues 604-1258 (NSTSEVKDLL…QLNSMKKDLR (655 aa)) are a coiled coil. A compositionally biased stretch (basic and acidic residues) spans 655 to 664 (RSQHNEKVEE). A disordered region spans residues 655 to 675 (RSQHNEKVEENSTLQQRLEES). S708 carries the post-translational modification Phosphoserine. Disordered stretches follow at residues 903–929 (AAQGNLSQTTQEQKQLSEKLKEESEQK) and 1263–1287 (PSKVLDDMDDDDDLSTDGGSLYEAP). Basic and acidic residues predominate over residues 917-929 (QLSEKLKEESEQK). Residues 1263 to 1302 (PSKVLDDMDDDDDLSTDGGSLYEAPVSYTFSKDSTVASQI) form a tail region.

This sequence belongs to the cingulin family. Homodimer or oligomer. Interacts with CD2AP and SH3BP1; probably part of a complex at cell junctions. Smooth muscle, spleen, testis, fetal brain, amygdala, corpus callosum, cerebellum, thalamus and subthalamic nucleus of adult brain.

Its subcellular location is the cell junction. It localises to the tight junction. Its function is as follows. May be involved in anchoring the apical junctional complex, especially tight junctions, to actin-based cytoskeletons. This is Cingulin-like protein 1 (CGNL1) from Homo sapiens (Human).